The chain runs to 625 residues: Putative surface protein bspA-like (625 aa).

Topologically, residues 1–548 are extracellular; that stretch reads MMTPGKSSKT…KAIKGGEIAG (548 aa). Residue Asn-15 is glycosylated (N-linked (GlcNAc...) asparagine). 13 LRR repeats span residues 38–60, 61–83, 85–106, 107–129, 153–175, 176–198, 200–221, 222–245, 247–267, 271–293, 325–347, 348–368, and 369–392; these read CSSFTSIIIPNSVTSIGTKAFTG, CSSLTSITIGNSVTSFGQEAFSE, SSITSITIPNSVTTIRDFAFSG, CSKLTSITIPNSVTSLGSHAFRG, CSSLTSITIPNSVTSIYSSAFYG, CSSLTSITIPDSVLDFGSAAFQE, SKLTNIKIGNNVDSIGSLAFKR, CSSLTNITIPDSVTTIANSAFYEC, KLTSITIGKSVTRIEGNAFSK, LTSITIKTTNDITSSITTDVFLN, IPKSDSNSMIRLQEITSLPTLTH, FTNLNKVTIENINELTIPESF, and IEGDNFEILITNNIKSIDPNAFKD. The N-linked (GlcNAc...) asparagine glycan is linked to Asn-227. Residues 439 to 538 form a disordered region; it reads KQSEENPNQP…TDDPSKSKEN (100 aa). Residues 443–526 are compositionally biased toward low complexity; it reads ENPNQPGENP…QPGENPSQPG (84 aa). Residues 549–571 traverse the membrane as a helical segment; sequence IIIGSLIGICLVVAICFGVYYYF. Over 572-625 the chain is Cytoplasmic; the sequence is MRIKPKNKNDDNEGNQEDTIANGTNEVTNENVLATFDEQPNNESDSNGLDSAEV. Residues 577–625 form a disordered region; sequence KNKNDDNEGNQEDTIANGTNEVTNENVLATFDEQPNNESDSNGLDSAEV. The segment covering 588–625 has biased composition (polar residues); the sequence is EDTIANGTNEVTNENVLATFDEQPNNESDSNGLDSAEV.

The protein resides in the cell membrane. Its function is as follows. May bind host tissue. This Trichomonas vaginalis protein is Putative surface protein bspA-like (BSPAL1).